The following is a 587-amino-acid chain: Synaptotagmin-3 (587 aa).

Residues 1–54 lie on the Vesicular side of the membrane; that stretch reads MSGDYEDDLCRRALILVSDLCARVRDADTNDRCQEFNELRIRGYPRGPDADISV. Residues 10–34 are cysteine motif; sequence CRRALILVSDLCARVRDADTNDRCQ. Residues 55 to 75 traverse the membrane as a helical segment; sequence SLLSVIVTFCGIVLLGVSLFV. Residues 76 to 587 are Cytoplasmic-facing; sequence SWKLCWVPWR…KGLSEKENSE (512 aa). A compositionally biased stretch (low complexity) spans 183-205; the sequence is PSQTSPELPSEGGTGSGLLLLPP. Residues 183–258 form a disordered region; the sequence is PSQTSPELPS…EERPPALPLP (76 aa). Positions 213-224 are enriched in polar residues; it reads AQSHQQVTSLAP. Over residues 229-244 the composition is skewed to low complexity; the sequence is PALPRPLTQQTLTTQA. Arg286 is subject to Omega-N-methylarginine. C2 domains lie at 296-417 and 428-562; these read PCGR…PLWR and DLGE…EHWH. Positions 327, 333, 385, 386, 387, 390, 393, 459, 465, 519, and 521 each coordinate Ca(2+).

The protein belongs to the synaptotagmin family. In terms of assembly, homodimer; disulfide-linked via the cysteine motif. Can also form heterodimers with SYT6, SYT9 and SYT10. Requires Ca(2+) as cofactor.

The protein localises to the cell membrane. It is found in the cytoplasmic vesicle. Its subcellular location is the secretory vesicle membrane. Ca(2+) sensor involved in Ca(2+)-dependent exocytosis of secretory vesicles through Ca(2+) and phospholipid binding to the C2 domain. Ca(2+) induces binding of the C2-domains to phospholipid membranes and to assembled SNARE-complexes; both actions contribute to triggering exocytosis. Plays a role in dendrite formation by melanocytes. The protein is Synaptotagmin-3 (Syt3) of Mus musculus (Mouse).